Here is a 157-residue protein sequence, read N- to C-terminus: Putative tRNA (cytidine(34)-2'-O)-methyltransferase (157 aa).

S-adenosyl-L-methionine-binding residues include isoleucine 79, glycine 104, and isoleucine 125.

Belongs to the class IV-like SAM-binding methyltransferase superfamily. RNA methyltransferase TrmH family. TrmL subfamily.

Its subcellular location is the cytoplasm. It carries out the reaction cytidine(34) in tRNA + S-adenosyl-L-methionine = 2'-O-methylcytidine(34) in tRNA + S-adenosyl-L-homocysteine + H(+). It catalyses the reaction 5-carboxymethylaminomethyluridine(34) in tRNA(Leu) + S-adenosyl-L-methionine = 5-carboxymethylaminomethyl-2'-O-methyluridine(34) in tRNA(Leu) + S-adenosyl-L-homocysteine + H(+). Could methylate the ribose at the nucleotide 34 wobble position in tRNA. This Geobacillus stearothermophilus (Bacillus stearothermophilus) protein is Putative tRNA (cytidine(34)-2'-O)-methyltransferase.